The primary structure comprises 332 residues: MTVTISQVLRPRGPQIERLTENRAKVVLEPLGRGYAHTLGNALRRVLLSSIPGSAITQVEIDGVLHEYTTVEGLQEDVLEVLLNLKDVAIRIHSGDTATLSLFKQGAGVVTAADIKTDHNVEIINDGHVICHLTKDTTINMRLKVERGFGYQPAVVRRRPDDENRTIGRLILDASFSPVRRVAYVVEAARVEQRTDLDKLIIDIETNGTIDAEEALRTAADILTDQLSVFGDFTHRDRGTVKPASSGVDPVLLRPIDDLELTVRSANCLKAESIYYIGDLIQKTEVELLKTPNLGKKSLTEIKEVLGQRGLGLGVKLENWPPPGVSQYGMLG.

Residues 1–234 are alpha N-terminal domain (alpha-NTD); the sequence is MTVTISQVLR…DQLSVFGDFT (234 aa). The interval 248–332 is alpha C-terminal domain (alpha-CTD); the sequence is VDPVLLRPID…PGVSQYGMLG (85 aa).

This sequence belongs to the RNA polymerase alpha chain family. In terms of assembly, homodimer. The RNAP catalytic core consists of 2 alpha, 1 beta, 1 beta' and 1 omega subunit. When a sigma factor is associated with the core the holoenzyme is formed, which can initiate transcription.

The catalysed reaction is RNA(n) + a ribonucleoside 5'-triphosphate = RNA(n+1) + diphosphate. DNA-dependent RNA polymerase catalyzes the transcription of DNA into RNA using the four ribonucleoside triphosphates as substrates. The protein is DNA-directed RNA polymerase subunit alpha of Xylella fastidiosa (strain M12).